Here is a 521-residue protein sequence, read N- to C-terminus: Probable protein kinase UbiB (521 aa).

A Protein kinase domain is found at S119–A497. ATP contacts are provided by residues V125–V133 and K151. The active-site Proton acceptor is the D286. Residues Q496–V516 traverse the membrane as a helical segment.

Belongs to the ABC1 family. UbiB subfamily.

It localises to the cell inner membrane. It functions in the pathway cofactor biosynthesis; ubiquinone biosynthesis [regulation]. In terms of biological role, is probably a protein kinase regulator of UbiI activity which is involved in aerobic coenzyme Q (ubiquinone) biosynthesis. The polypeptide is Probable protein kinase UbiB (Delftia acidovorans (strain DSM 14801 / SPH-1)).